Here is a 508-residue protein sequence, read N- to C-terminus: Photosystem II CP47 reaction center protein (508 aa).

Transmembrane regions (helical) follow at residues 21 to 36 (SVHL…WAGS), 101 to 115 (IVLS…IWHW), 140 to 156 (GIHL…FGAF), 203 to 218 (IAAG…FHLS), 237 to 252 (VLSS…AFVV), and 457 to 472 (TFAL…HGAR).

This sequence belongs to the PsbB/PsbC family. PsbB subfamily. As to quaternary structure, PSII is composed of 1 copy each of membrane proteins PsbA, PsbB, PsbC, PsbD, PsbE, PsbF, PsbH, PsbI, PsbJ, PsbK, PsbL, PsbM, PsbT, PsbX, PsbY, PsbZ, Psb30/Ycf12, at least 3 peripheral proteins of the oxygen-evolving complex and a large number of cofactors. It forms dimeric complexes. The cofactor is Binds multiple chlorophylls. PSII binds additional chlorophylls, carotenoids and specific lipids..

The protein localises to the plastid. Its subcellular location is the chloroplast thylakoid membrane. One of the components of the core complex of photosystem II (PSII). It binds chlorophyll and helps catalyze the primary light-induced photochemical processes of PSII. PSII is a light-driven water:plastoquinone oxidoreductase, using light energy to abstract electrons from H(2)O, generating O(2) and a proton gradient subsequently used for ATP formation. The protein is Photosystem II CP47 reaction center protein of Angiopteris evecta (Mule's foot fern).